We begin with the raw amino-acid sequence, 211 residues long: MKVTAAFAGLLVTAFAAPVPEPVLVSRSAGINYVQNYNGNLGDFTYDESAGTFSMYWEDGVSSDFVVGLGWTTGSSKAITYSAEYSASGSSSYLAVYGWVNYPQAEYYIVEDYGDYNPCSSATSLGTVYSDGSTYQVCTDTRTNEPSITGTSTFTQYFSVRESTRTSGTVTVANHFNFWAQHGFGNSDFNYQVMAVEAWSGAGSASVTISS.

An N-terminal signal peptide occupies residues 1 to 27 (MKVTAAFAGLLVTAFAAPVPEPVLVSR). Positions 28-210 (SAGINYVQNY…GAGSASVTIS (183 aa)) constitute a GH11 domain. The Nucleophile role is filled by E106. An intrachain disulfide couples C119 to C138. E197 (proton donor) is an active-site residue.

This sequence belongs to the glycosyl hydrolase 11 (cellulase G) family.

It is found in the secreted. It catalyses the reaction Endohydrolysis of (1-&gt;4)-beta-D-xylosidic linkages in xylans.. It functions in the pathway glycan degradation; xylan degradation. Endo-1,4-beta-xylanase involved in the hydrolysis of xylan, a major structural heterogeneous polysaccharide found in plant biomass representing the second most abundant polysaccharide in the biosphere, after cellulose. This is Endo-1,4-beta-xylanase A (xynA) from Aspergillus niger.